The sequence spans 383 residues: Lipoyl synthase, mitochondrial (383 aa).

Residues 1 to 19 (MHASTLTRCMRVAQNARCL) constitute a mitochondrion transit peptide. The segment at 69-97 (DAAPGTKPSRKPNASNRKPKWLKAQPTQG) is disordered. [4Fe-4S] cluster is bound by residues Cys-116, Cys-121, Cys-127, Cys-147, Cys-151, Cys-154, and Ser-362. Residues 132 to 351 (KDGIATATIM…QKVAEQMGFL (220 aa)) form the Radical SAM core domain.

Belongs to the radical SAM superfamily. Lipoyl synthase family. It depends on [4Fe-4S] cluster as a cofactor.

It is found in the mitochondrion. The catalysed reaction is [[Fe-S] cluster scaffold protein carrying a second [4Fe-4S](2+) cluster] + N(6)-octanoyl-L-lysyl-[protein] + 2 oxidized [2Fe-2S]-[ferredoxin] + 2 S-adenosyl-L-methionine + 4 H(+) = [[Fe-S] cluster scaffold protein] + N(6)-[(R)-dihydrolipoyl]-L-lysyl-[protein] + 4 Fe(3+) + 2 hydrogen sulfide + 2 5'-deoxyadenosine + 2 L-methionine + 2 reduced [2Fe-2S]-[ferredoxin]. It functions in the pathway protein modification; protein lipoylation via endogenous pathway; protein N(6)-(lipoyl)lysine from octanoyl-[acyl-carrier-protein]: step 2/2. Catalyzes the radical-mediated insertion of two sulfur atoms into the C-6 and C-8 positions of the octanoyl moiety bound to the lipoyl domains of lipoate-dependent enzymes, thereby converting the octanoylated domains into lipoylated derivatives. This is Lipoyl synthase, mitochondrial from Phytophthora infestans (strain T30-4) (Potato late blight agent).